The sequence spans 245 residues: Pyridoxine 5'-phosphate synthase (245 aa).

Asn7 is a 3-amino-2-oxopropyl phosphate binding site. Position 9–10 (9–10) interacts with 1-deoxy-D-xylulose 5-phosphate; sequence DH. Arg18 lines the 3-amino-2-oxopropyl phosphate pocket. His43 acts as the Proton acceptor in catalysis. The 1-deoxy-D-xylulose 5-phosphate site is built by Arg45 and His50. Glu70 acts as the Proton acceptor in catalysis. Thr100 contacts 1-deoxy-D-xylulose 5-phosphate. Catalysis depends on His190, which acts as the Proton donor. 3-amino-2-oxopropyl phosphate is bound by residues Gly191 and 212–213; that span reads GH.

It belongs to the PNP synthase family. As to quaternary structure, homooctamer; tetramer of dimers.

It localises to the cytoplasm. It carries out the reaction 3-amino-2-oxopropyl phosphate + 1-deoxy-D-xylulose 5-phosphate = pyridoxine 5'-phosphate + phosphate + 2 H2O + H(+). It participates in cofactor biosynthesis; pyridoxine 5'-phosphate biosynthesis; pyridoxine 5'-phosphate from D-erythrose 4-phosphate: step 5/5. Functionally, catalyzes the complicated ring closure reaction between the two acyclic compounds 1-deoxy-D-xylulose-5-phosphate (DXP) and 3-amino-2-oxopropyl phosphate (1-amino-acetone-3-phosphate or AAP) to form pyridoxine 5'-phosphate (PNP) and inorganic phosphate. The protein is Pyridoxine 5'-phosphate synthase of Prochlorococcus marinus (strain MIT 9303).